Consider the following 429-residue polypeptide: MKKQNNLRSLAAQAVEQVVEQGQSLSNVLPPLQQKVADKDKALLQELCFGVLRTLSQLEWLINKLMSRPMTGKQRTVHYLIMVGFYQLLYTRVPPHAALAETVEGAVAIKRPQLKGLINGVLRQFQRQQETLLNEFATSDARFLHPGWLVKRLQNAYPTQWQHIIEANNQRPPMWLRVNRTHHTRDGWLGLLEDAGMKGYPHPDYPDAVRLETPAPVHALPGFAEGWVTVQDASAQGCAVFLAPQNGEHILDLCAAPGGKTTHILEVAPEADVLAVDIDEQRLSRVYDNLKRLGMKATVKQGDGRYPSQWCGEQQFDRILLDAPCSATGVIRRHPDIKWLRRDRDIAELAQLQAEILDAVWPRLKPGGTLVYATCSVLPEENRDQIKAFLQRTPDAALSETGTPDQPGQQNLPGGEEGDGFFYAKLIKK.

S-adenosyl-L-methionine is bound by residues 254-260 (CAAPGGK), D277, D303, and D322. The Nucleophile role is filled by C375. The disordered stretch occupies residues 397-419 (ALSETGTPDQPGQQNLPGGEEGD). The span at 400–412 (ETGTPDQPGQQNL) shows a compositional bias: polar residues.

This sequence belongs to the class I-like SAM-binding methyltransferase superfamily. RsmB/NOP family.

It localises to the cytoplasm. The enzyme catalyses cytidine(967) in 16S rRNA + S-adenosyl-L-methionine = 5-methylcytidine(967) in 16S rRNA + S-adenosyl-L-homocysteine + H(+). Specifically methylates the cytosine at position 967 (m5C967) of 16S rRNA. This is Ribosomal RNA small subunit methyltransferase B from Salmonella newport (strain SL254).